An 829-amino-acid polypeptide reads, in one-letter code: Isethionate sulfite-lyase (829 aa).

One can recognise a PFL domain in the interval glutamate 31–leucine 699. Residues arginine 188, glutamine 192, cysteine 467–glutamate 469, and arginine 677 contribute to the 2-hydroxyethane-1-sulfonate site. The active-site Cysteine radical intermediate is cysteine 467. Catalysis depends on glutamate 469, which acts as the Proton acceptor. The Glycine radical domain occupies aspartate 706–methionine 829. Glycine 804 carries the glycine radical modification.

This sequence belongs to the glycyl radical enzyme (GRE) family. As to quaternary structure, homodimer. In terms of processing, requires the activating protein IslB to generate the key active site glycyl radical on Gly-804 that is involved in catalysis.

It carries out the reaction 2-hydroxyethane-1-sulfonate = acetaldehyde + sulfite + H(+). The protein operates within organosulfur degradation; alkanesulfonate degradation. Functionally, involved in an anaerobic respiration pathway that converts the sulfonate isethionate (2-hydroxyethanesulfonate) to ammonia, acetate and sulfide. Catalyzes the radical-mediated C-S bond cleavage of isethionate (2-hydroxyethanesulfonate) to form sulfite and acetaldehyde. The polypeptide is Isethionate sulfite-lyase (Oleidesulfovibrio alaskensis (strain ATCC BAA-1058 / DSM 17464 / G20) (Desulfovibrio alaskensis)).